The following is a 189-amino-acid chain: FUN14 domain-containing protein 2 (189 aa).

Residues 1–80 (METSAPRAGS…GQESGPSAEK (80 aa)) are Cytoplasmic-facing. A phosphoserine mark is found at Ser10 and Ser53. The helical transmembrane segment at 81 to 101 (YSVATQLFIGGVTGWCTGFIF) threads the bilayer. Topologically, residues 102 to 107 (QNVGKL) are mitochondrial intermembrane. The helical transmembrane segment at 108–128 (AATAVGGGFFLLQLANHTGYI) threads the bilayer. Residues 129 to 164 (KVDWQRVEKDMKKAKEQLKIRKSNQMPTEVRSKAEE) are Cytoplasmic-facing. Phosphoserine is present on Ser151. A helical transmembrane segment spans residues 165–185 (VVSFVKKNVLVTGGFFGGFLL). At 186–189 (GMAS) the chain is on the mitochondrial intermembrane side.

Belongs to the FUN14 family.

Its subcellular location is the mitochondrion outer membrane. The protein resides in the nucleus. In terms of biological role, binds directly and specifically 1,2-Diacyl-sn-glycero-3-phospho-(1'-myo-inositol-3',4',5'-bisphosphate) (PIP3) leading to the recruitment of PIP3 to mitochondria and may play a role in the regulation of the platelet activation via AKT/GSK3B/cGMP signaling pathways. May act as transcription factor that regulates SREBP1 (isoform SREBP-1C) expression in order to modulate triglyceride (TG) homeostasis in hepatocytes. The protein is FUN14 domain-containing protein 2 of Macaca mulatta (Rhesus macaque).